The primary structure comprises 251 residues: Small ribosomal subunit protein uS2 (251 aa).

The protein belongs to the universal ribosomal protein uS2 family.

The polypeptide is Small ribosomal subunit protein uS2 (rpsB) (Arthrospira platensis (Spirulina platensis)).